We begin with the raw amino-acid sequence, 227 residues long: Cytochrome c oxidase subunit 2 (227 aa).

Residues 1–14 (MAYPVQLGFQDAAS) are Mitochondrial intermembrane-facing. The helical transmembrane segment at 15 to 45 (PIMEELLYFHDHTLMIMFLISSLVLYIISLM) threads the bilayer. The Mitochondrial matrix segment spans residues 46–59 (LTTELIHTSTMDAQ). Residues 60–87 (EVETVWTILPAVILILIALPSLRILYMM) traverse the membrane as a helical segment. Over 88–227 (DEISTPSLTL…HFEEWLLSML (140 aa)) the chain is Mitochondrial intermembrane. Cu cation is bound by residues His161, Cys196, Glu198, Cys200, His204, and Met207. Mg(2+) is bound at residue Glu198.

The protein belongs to the cytochrome c oxidase subunit 2 family. Component of the cytochrome c oxidase (complex IV, CIV), a multisubunit enzyme composed of 14 subunits. The complex is composed of a catalytic core of 3 subunits MT-CO1, MT-CO2 and MT-CO3, encoded in the mitochondrial DNA, and 11 supernumerary subunits COX4I, COX5A, COX5B, COX6A, COX6B, COX6C, COX7A, COX7B, COX7C, COX8 and NDUFA4, which are encoded in the nuclear genome. The complex exists as a monomer or a dimer and forms supercomplexes (SCs) in the inner mitochondrial membrane with NADH-ubiquinone oxidoreductase (complex I, CI) and ubiquinol-cytochrome c oxidoreductase (cytochrome b-c1 complex, complex III, CIII), resulting in different assemblies (supercomplex SCI(1)III(2)IV(1) and megacomplex MCI(2)III(2)IV(2)). Found in a complex with TMEM177, COA6, COX18, COX20, SCO1 and SCO2. Interacts with TMEM177 in a COX20-dependent manner. Interacts with COX20. Interacts with COX16. Cu cation is required as a cofactor.

The protein resides in the mitochondrion inner membrane. The enzyme catalyses 4 Fe(II)-[cytochrome c] + O2 + 8 H(+)(in) = 4 Fe(III)-[cytochrome c] + 2 H2O + 4 H(+)(out). In terms of biological role, component of the cytochrome c oxidase, the last enzyme in the mitochondrial electron transport chain which drives oxidative phosphorylation. The respiratory chain contains 3 multisubunit complexes succinate dehydrogenase (complex II, CII), ubiquinol-cytochrome c oxidoreductase (cytochrome b-c1 complex, complex III, CIII) and cytochrome c oxidase (complex IV, CIV), that cooperate to transfer electrons derived from NADH and succinate to molecular oxygen, creating an electrochemical gradient over the inner membrane that drives transmembrane transport and the ATP synthase. Cytochrome c oxidase is the component of the respiratory chain that catalyzes the reduction of oxygen to water. Electrons originating from reduced cytochrome c in the intermembrane space (IMS) are transferred via the dinuclear copper A center (CU(A)) of subunit 2 and heme A of subunit 1 to the active site in subunit 1, a binuclear center (BNC) formed by heme A3 and copper B (CU(B)). The BNC reduces molecular oxygen to 2 water molecules using 4 electrons from cytochrome c in the IMS and 4 protons from the mitochondrial matrix. In Eulemur macaco (Black lemur), this protein is Cytochrome c oxidase subunit 2 (MT-CO2).